The following is a 269-amino-acid chain: 2-dehydro-3-deoxyphosphooctonate aldolase (269 aa).

It belongs to the KdsA family.

Its subcellular location is the cytoplasm. The enzyme catalyses D-arabinose 5-phosphate + phosphoenolpyruvate + H2O = 3-deoxy-alpha-D-manno-2-octulosonate-8-phosphate + phosphate. Its pathway is carbohydrate biosynthesis; 3-deoxy-D-manno-octulosonate biosynthesis; 3-deoxy-D-manno-octulosonate from D-ribulose 5-phosphate: step 2/3. It functions in the pathway bacterial outer membrane biogenesis; lipopolysaccharide biosynthesis. In Chlamydia abortus (strain DSM 27085 / S26/3) (Chlamydophila abortus), this protein is 2-dehydro-3-deoxyphosphooctonate aldolase.